Here is a 341-residue protein sequence, read N- to C-terminus: Mitochondrial protein C2orf69 homolog (341 aa).

Residues 1–35 (MLQVVQSPHNLVFMGSIRSVVACLSLAAVARKMTA) constitute a mitochondrion transit peptide.

It belongs to the C2orf69 family.

Its subcellular location is the mitochondrion matrix. In terms of biological role, may play a role in the respiratory chain. This Danio rerio (Zebrafish) protein is Mitochondrial protein C2orf69 homolog.